Reading from the N-terminus, the 112-residue chain is Peptidyl-tRNA hydrolase (112 aa).

This sequence belongs to the PTH2 family.

The protein localises to the cytoplasm. It carries out the reaction an N-acyl-L-alpha-aminoacyl-tRNA + H2O = an N-acyl-L-amino acid + a tRNA + H(+). The natural substrate for this enzyme may be peptidyl-tRNAs which drop off the ribosome during protein synthesis. This Haloquadratum walsbyi (strain DSM 16790 / HBSQ001) protein is Peptidyl-tRNA hydrolase.